The chain runs to 116 residues: Large ribosomal subunit protein bL20 (116 aa).

It belongs to the bacterial ribosomal protein bL20 family.

Its function is as follows. Binds directly to 23S ribosomal RNA and is necessary for the in vitro assembly process of the 50S ribosomal subunit. It is not involved in the protein synthesizing functions of that subunit. This Bacteroides thetaiotaomicron (strain ATCC 29148 / DSM 2079 / JCM 5827 / CCUG 10774 / NCTC 10582 / VPI-5482 / E50) protein is Large ribosomal subunit protein bL20.